A 45-amino-acid polypeptide reads, in one-letter code: Photosystem II reaction center protein K (45 aa).

A propeptide spanning residues Met-1 to Ala-8 is cleaved from the precursor. A helical membrane pass occupies residues Leu-24–Phe-44.

This sequence belongs to the PsbK family. PSII is composed of 1 copy each of membrane proteins PsbA, PsbB, PsbC, PsbD, PsbE, PsbF, PsbH, PsbI, PsbJ, PsbK, PsbL, PsbM, PsbT, PsbX, PsbY, PsbZ, Psb30/Ycf12, peripheral proteins PsbO, CyanoQ (PsbQ), PsbU, PsbV and a large number of cofactors. It forms dimeric complexes.

The protein resides in the cellular thylakoid membrane. Its function is as follows. One of the components of the core complex of photosystem II (PSII). PSII is a light-driven water:plastoquinone oxidoreductase that uses light energy to abstract electrons from H(2)O, generating O(2) and a proton gradient subsequently used for ATP formation. It consists of a core antenna complex that captures photons, and an electron transfer chain that converts photonic excitation into a charge separation. This Picosynechococcus sp. (strain ATCC 27264 / PCC 7002 / PR-6) (Agmenellum quadruplicatum) protein is Photosystem II reaction center protein K.